Consider the following 338-residue polypeptide: UDP-3-O-acylglucosamine N-acyltransferase (338 aa).

Residue His-239 is the Proton acceptor of the active site.

This sequence belongs to the transferase hexapeptide repeat family. LpxD subfamily. As to quaternary structure, homotrimer.

It carries out the reaction a UDP-3-O-[(3R)-3-hydroxyacyl]-alpha-D-glucosamine + a (3R)-hydroxyacyl-[ACP] = a UDP-2-N,3-O-bis[(3R)-3-hydroxyacyl]-alpha-D-glucosamine + holo-[ACP] + H(+). It participates in bacterial outer membrane biogenesis; LPS lipid A biosynthesis. In terms of biological role, catalyzes the N-acylation of UDP-3-O-acylglucosamine using 3-hydroxyacyl-ACP as the acyl donor. Is involved in the biosynthesis of lipid A, a phosphorylated glycolipid that anchors the lipopolysaccharide to the outer membrane of the cell. This chain is UDP-3-O-acylglucosamine N-acyltransferase, found in Xylella fastidiosa (strain 9a5c).